The following is a 190-amino-acid chain: Elongation factor P-like protein (190 aa).

It belongs to the elongation factor P family.

This chain is Elongation factor P-like protein, found in Proteus mirabilis (strain HI4320).